A 157-amino-acid polypeptide reads, in one-letter code: Endoribonuclease YbeY (157 aa).

Residues His122, His126, and His132 each contribute to the Zn(2+) site.

Belongs to the endoribonuclease YbeY family. Requires Zn(2+) as cofactor.

It is found in the cytoplasm. In terms of biological role, single strand-specific metallo-endoribonuclease involved in late-stage 70S ribosome quality control and in maturation of the 3' terminus of the 16S rRNA. The polypeptide is Endoribonuclease YbeY (Lysinibacillus sphaericus (strain C3-41)).